Here is a 338-residue protein sequence, read N- to C-terminus: Protein-glutamate methylesterase/protein-glutamine glutaminase 2 (338 aa).

In terms of domain architecture, Response regulatory spans 2-119 (RIGIVNDSAL…SDTKLAAGPL (118 aa)). D53 is subject to 4-aspartylphosphate. The 186-residue stretch at 145–330 (PTPTAPRLVA…PLQKIAPRLV (186 aa)) folds into the CheB-type methylesterase domain. Catalysis depends on residues S158, H185, and D278.

Belongs to the CheB family. Post-translationally, phosphorylated by CheA. Phosphorylation of the N-terminal regulatory domain activates the methylesterase activity.

Its subcellular location is the cytoplasm. The enzyme catalyses [protein]-L-glutamate 5-O-methyl ester + H2O = L-glutamyl-[protein] + methanol + H(+). It catalyses the reaction L-glutaminyl-[protein] + H2O = L-glutamyl-[protein] + NH4(+). Its function is as follows. Involved in chemotaxis. Part of a chemotaxis signal transduction system that modulates chemotaxis in response to various stimuli. Catalyzes the demethylation of specific methylglutamate residues introduced into the chemoreceptors (methyl-accepting chemotaxis proteins or MCP) by CheR. Also mediates the irreversible deamidation of specific glutamine residues to glutamic acid. This is Protein-glutamate methylesterase/protein-glutamine glutaminase 2 from Cupriavidus metallidurans (strain ATCC 43123 / DSM 2839 / NBRC 102507 / CH34) (Ralstonia metallidurans).